The sequence spans 146 residues: MFANAGLSPFVAIWTARAASLYTSHNFWCAAAVSAAVYVGSAVVPAAVAGPLFVGRVSATIKAAAPSTTAAIATLATAANGQLRERGGAGGWVGVHCPVVGGGGVGHPRKAIAAAVSVHSTCMPAAFGGHLGLGDRSRSVSLSGTP.

Transmembrane regions (helical) follow at residues 1–21 (MFAN…AASL), 35–55 (AAVY…LFVG), 87–107 (GGAG…GVGH), and 111–131 (AIAA…GGHL).

It is found in the cell membrane. This is an uncharacterized protein from Mycobacterium tuberculosis (strain CDC 1551 / Oshkosh).